The primary structure comprises 301 residues: Nucleosome assembly protein 1;3 (301 aa).

A coiled-coil region spans residues 15–69; it reads VETLKNKLQALAEQHVDVLESLAPVVRKRVDVLIEIQSQHDELEAKFLEEKAALE. A Nuclear export signal motif is present at residues 36 to 51; that stretch reads LAPVVRKRVDVLIEIQ. The segment at 278–301 is disordered; sequence DEDYGASWVDDEEDDDDEYSDEEA.

This sequence belongs to the nucleosome assembly protein (NAP) family.

The protein resides in the nucleus. It localises to the cytoplasm. Functionally, may modulate chromatin structure by regulation of nucleosome assembly/disassembly. In Oryza sativa subsp. japonica (Rice), this protein is Nucleosome assembly protein 1;3 (NAP1;3).